The primary structure comprises 148 residues: Snaclec stejaggregin-A subunit beta-2 (148 aa).

Residues methionine 1–alanine 23 form the signal peptide. An intrachain disulfide couples cysteine 27 to cysteine 38. The C-type lectin domain occupies tyrosine 34 to lysine 145. N-linked (GlcNAc...) asparagine glycans are attached at residues asparagine 47 and asparagine 78. 2 disulfides stabilise this stretch: cysteine 55–cysteine 144 and cysteine 121–cysteine 136.

The protein belongs to the snaclec family. As to quaternary structure, heteromultimer; disulfide-linked. As to expression, expressed by the venom gland.

The protein localises to the secreted. Interferes with one step of hemostasis (modulation of platelet aggregation, or coagulation cascade, for example). The protein is Snaclec stejaggregin-A subunit beta-2 of Trimeresurus stejnegeri (Chinese green tree viper).